The chain runs to 156 residues: Nuclear cap-binding protein subunit 2 (156 aa).

S2 bears the N-acetylserine mark. S13 and S18 each carry phosphoserine. MRNA-binding positions include Y20, Y43, 112–116, 123–127, and 133–134; these read RTDWD, RQYGR, and QV. The 79-residue stretch at 40 to 118 folds into the RRM domain; that stretch reads CTLYVGNLSF…RIIRTDWDAG (79 aa). A disordered region spans residues 124–156; the sequence is QYGRGRSGGQVRDEYRQDYDAGRGGYGKLAQNQ. Positions 134-144 are enriched in basic and acidic residues; the sequence is VRDEYRQDYDA. R146 bears the Omega-N-methylarginine mark.

The protein belongs to the RRM NCBP2 family. As to quaternary structure, component of the nuclear cap-binding complex (CBC), a heterodimer composed of NCBP1/CBP80 and NCBP2/CBP20 that interacts with m7GpppG-capped RNA. Found in a U snRNA export complex with PHAX/RNUXA, NCBP1/CBP80, NCBP2/CBP20, RAN, XPO1 and m7G-capped RNA. Interacts with PHAX/RNUXA, EIF4G1, HNRNPF, HNRNPH1 and ALYREF/THOC4/ALY. Interacts with SRRT/ARS2 and KPNA3.

The protein localises to the nucleus. Its subcellular location is the cytoplasm. In terms of biological role, component of the cap-binding complex (CBC), which binds co-transcriptionally to the 5' cap of pre-mRNAs and is involved in various processes such as pre-mRNA splicing, translation regulation, nonsense-mediated mRNA decay, RNA-mediated gene silencing (RNAi) by microRNAs (miRNAs) and mRNA export. The CBC complex is involved in mRNA export from the nucleus via its interaction with ALYREF/THOC4/ALY, leading to the recruitment of the mRNA export machinery to the 5' end of mRNA and to mRNA export in a 5' to 3' direction through the nuclear pore. The CBC complex is also involved in mediating U snRNA and intronless mRNAs export from the nucleus. The CBC complex is essential for a pioneer round of mRNA translation, before steady state translation when the CBC complex is replaced by cytoplasmic cap-binding protein eIF4E. The pioneer round of mRNA translation mediated by the CBC complex plays a central role in nonsense-mediated mRNA decay (NMD), NMD only taking place in mRNAs bound to the CBC complex, but not on eIF4E-bound mRNAs. The CBC complex enhances NMD in mRNAs containing at least one exon-junction complex (EJC) via its interaction with UPF1, promoting the interaction between UPF1 and UPF2. The CBC complex is also involved in 'failsafe' NMD, which is independent of the EJC complex, while it does not participate in Staufen-mediated mRNA decay (SMD). During cell proliferation, the CBC complex is also involved in microRNAs (miRNAs) biogenesis via its interaction with SRRT/ARS2, thereby being required for miRNA-mediated RNA interference. The CBC complex also acts as a negative regulator of PARN, thereby acting as an inhibitor of mRNA deadenylation. In the CBC complex, NCBP2/CBP20 recognizes and binds capped RNAs (m7GpppG-capped RNA) but requires NCBP1/CBP80 to stabilize the movement of its N-terminal loop and lock the CBC into a high affinity cap-binding state with the cap structure. The conventional cap-binding complex with NCBP2 binds both small nuclear RNA (snRNA) and messenger (mRNA) and is involved in their export from the nucleus. This is Nuclear cap-binding protein subunit 2 (NCBP2) from Bos taurus (Bovine).